The following is a 615-amino-acid chain: Prolycopene isomerase, chloroplastic (615 aa).

The transit peptide at 1–62 directs the protein to the chloroplast; that stretch reads MSTSIFETPL…PKPLNFGFCR (62 aa).

Belongs to the carotenoid/retinoid oxidoreductase family. CrtISO subfamily. NAD(+) serves as cofactor. NADP(+) is required as a cofactor. It depends on FAD as a cofactor.

Its subcellular location is the plastid. The protein localises to the chloroplast membrane. The enzyme catalyses 7,7',9,9'-tetra-cis-lycopene = all-trans-lycopene. It functions in the pathway carotenoid biosynthesis; lycopene biosynthesis. In terms of biological role, carotene cis-trans-isomerase that converts 7,9,9'-tri-cis-neurosporene to 9'-cis-neurosporene and 7,9,9',7'-tetra-cis-lycopene (also known as prolycopene) into all-trans-lycopene. Isomerization requires redox-active components, suggesting that isomerization is achieved by a reversible redox reaction acting at specific double bonds. Isomerizes adjacent cis-double bonds at C7 and C9 pairwise into the trans-configuration, but is incapable of isomerizing single cis-double bonds at C9 and C9'. The protein is Prolycopene isomerase, chloroplastic (CRTISO) of Daucus carota (Wild carrot).